The chain runs to 61 residues: Beta-defensin 133 (61 aa).

The N-terminal stretch at 1–23 (MKIHVFLFVLFFFLVPIATRVKC) is a signal peptide. Cystine bridges form between C31-C59 and C38-C52.

This sequence belongs to the beta-defensin family.

It is found in the secreted. Functionally, has antibacterial activity. The chain is Beta-defensin 133 (DEFB133) from Homo sapiens (Human).